We begin with the raw amino-acid sequence, 5541 residues long: Malpibaldin synthetase (5541 aa).

The span at 1–13 (MGDKRPDGIKSAE) shows a compositional bias: basic and acidic residues. A disordered region spans residues 1–26 (MGDKRPDGIKSAESHGQPSAPFGAEN). The condensation 1 stretch occupies residues 137-378 (KEDDIARDES…IDIISPAEKT (242 aa)). Residues 401–799 (FEEQVDKSPD…GRNDDQVKIR (399 aa)) are adenylation 1. One can recognise a Carrier 1 domain in the interval 901–975 (VPCGETEDAI…VLAQDLSKHQ (75 aa)). At Ser936 the chain carries O-(pantetheine 4'-phosphoryl)serine. The interval 1021–1469 (QDVYSLAPLQ…LPLDERTKLL (449 aa)) is dual epimerase/condensation (E/C) domain 1. Positions 1489 to 1899 (FEQQVKQSPI…GRNDDQIKIR (411 aa)) are adenylation 2. One can recognise a Carrier 2 domain in the interval 2001–2075 (SPQGRIECAL…SFAQAFKGQL (75 aa)). Ser2036 carries the post-translational modification O-(pantetheine 4'-phosphoryl)serine. Residues 2095-2537 (ELSFSQQRLW…LGSTEEELLL (443 aa)) form a condensation 2 region. Residues 2557-2956 (FEDQVERSPD…GRNDDQVKIR (400 aa)) are adenylation 3. The Carrier 3 domain occupies 3058 to 3132 (EPQGEVEMKL…VLAASITRGC (75 aa)). Residue Ser3093 is modified to O-(pantetheine 4'-phosphoryl)serine. Residues 3182-3616 (QDIYSLSPLQ…VIPAEEHDLL (435 aa)) form a dual epimerase/condensation (E/C) domain 2 region. The tract at residues 3637-4038 (FENQVRERPE…GRNDEQVKIR (402 aa)) is adenylation 4. The Carrier 4 domain maps to 4140 to 4214 (APRGDIEISL…VLAASLNTHQ (75 aa)). Ser4175 carries the O-(pantetheine 4'-phosphoryl)serine modification. The tract at residues 4260–4695 (VQDVYSLSPL…VIPAEEHDLL (436 aa)) is dual epimerase/condensation (E/C) domain 3. Residues 4716–5117 (FENQVRERPE…GRNDEQVKIR (402 aa)) form an adenylation 5 region. The Carrier 5 domain maps to 5219–5294 (LPSGDVEIGL…ELAQKLVQGG (76 aa)). Residue Ser5254 is modified to O-(pantetheine 4'-phosphoryl)serine. The tract at residues 5315–5523 (PLFCIHSGLG…VECTHIEMDK (209 aa)) is thioesterase (TE) domain.

This sequence belongs to the NRP synthetase family.

Functionally, nonribosomal peptide synthetase that catalyzes the biosynthesis of the hydrophobic cyclopentapeptides malpibaldins, natural products that show biosurfactant activities. Module 3 shows promiscuous adenylation (accepting either Trp, Phe or Tyr) leading to the parallel production of multiple products from one NRPS assembly line, including malpibaldin A corresponding to cyclo(-L-Leu-D-Leu-D-Phe-L-Leu-D-Val-), malpibaldin B corresponding to cyclo(-L-Leu-D-Leu-D-Tyr-L-Leu-D-Val-) and malpibaldin C corresponding to cyclo(-Leu-Leu-Trp-Leu-Val-). This is Malpibaldin synthetase from Mortierella alpina (Oleaginous fungus).